We begin with the raw amino-acid sequence, 1183 residues long: Protein deacetylase HDAC6 (1183 aa).

The disordered stretch occupies residues 1–61 (MTSTGQDSST…KGKMKKLSQP (61 aa)). Over residues 18–29 (NPQSPLQDSSAT) the composition is skewed to polar residues. The residue at position 21 (Ser21) is a Phosphoserine. Arg32 is modified (omega-N-methylarginine). Residues 66 to 75 (LIVGLQGLDL) carry the Nuclear export signal motif. Histone deacetylase regions lie at residues 86-434 (GLVF…TLLG) and 512-830 (GLVY…SLLG). Catalysis depends on His215, which acts as the 1. His641 serves as the catalytic 2. Residues 972–1042 (ATENSANQTT…EAQEVQESEE (71 aa)) form a disordered region. Residues 980–996 (TTSGEEASGETESFGTS) are compositionally biased toward low complexity. Phosphothreonine is present on residues Thr990, Thr995, and Thr1005. The segment covering 997 to 1008 (PSSNASKQTTGA) has biased composition (polar residues). Position 1009 is a phosphoserine (Ser1009). The segment covering 1021–1035 (ELGLSSTLELSSEAQ) has biased composition (low complexity). The UBP-type zinc-finger motif lies at 1079–1177 (SWCPHLMAVC…NAAHQNKFGE (99 aa)). Positions 1081, 1083, 1101, 1104, 1113, 1116, and 1121 each coordinate Zn(2+). A ubiquitin binding region spans residues 1122–1124 (SRY). 5 residues coordinate Zn(2+): His1128, His1132, His1138, Cys1151, and Cys1154. The ubiquitin binding stretch occupies residues 1150 to 1157 (WCYLCQAY).

It belongs to the histone deacetylase family. HD type 2 subfamily. In terms of assembly, forms a trimeric complex in the nucleus consisting of BANP, HDAC6 and KHDRBS1/SAM68; HDAC6 keeps KHDRBS1 in a deacetylated state which inhibits the inclusion of CD44 alternate exons. The complex is disrupted by MAPK1/MAPK3-mediated phosphorylation of BANP which results in BANP export to the cytoplasm. This facilitates acetylation of KHDRBS1 and CD44 variant exon inclusion. Interacts with SIRT2 (via both phosphorylated, unphosphorylated, active or inactive forms); the interaction is necessary for the complex to interact with alpha-tubulin. Under proteasome impairment conditions, interacts with UBD via its histone deacetylase 1 and UBP-type zinc-finger regions. Interacts with BBIP1, CBFA2T3, CYLD, DDIT3/CHOP, ZMYND15, F-actin and HDAC11. Interacts with RIPOR2; this interaction occurs during early myogenic differentiation and prevents HDAC6 to deacetylate tubulin. Interacts with AURKA; AURKA-mediated phosphorylation of HDAC6 promotes deacetylation of alpha-tubulin. Interacts with DYSF; this interaction occurs during early myogenic differentiation. Interacts with TPPP; inhibiting the tubulin deacetylase activity of HDAC6. Interacts with DYNLL1. Interacts with ATP13A2; the interaction results in recruitment of HDAC6 to lysosomes to promote CTTN deacetylation. Interacts with CCDC141 (via the N-terminal region); inhibiting the deacetylase activity of HDAC6. Interacts with IPO7; the interaction facilitates HDAC6 nuclear translocation in dental papilla cells. It depends on Zn(2+) as a cofactor. Phosphorylated by AURKA; phosphorylation increases HDAC6-mediated deacetylation of alpha-tubulin and subsequent disassembly of cilia. Post-translationally, ubiquitinated. Its polyubiquitination however does not lead to its degradation. In terms of processing, sumoylated in vitro.

It localises to the cytoplasm. Its subcellular location is the cytoskeleton. It is found in the nucleus. The protein resides in the perikaryon. The protein localises to the cell projection. It localises to the dendrite. Its subcellular location is the axon. It is found in the cilium. The protein resides in the microtubule organizing center. The protein localises to the centrosome. It localises to the cilium basal body. The catalysed reaction is N(6)-acetyl-L-lysyl-[protein] + H2O = L-lysyl-[protein] + acetate. The enzyme catalyses N(6)-acetyl-L-lysyl-[alpha-tubulin] + H2O = L-lysyl-[alpha-tubulin] + acetate. It participates in protein modification; protein ubiquitination. Functionally, deacetylates a wide range of non-histone substrates. Plays a central role in microtubule-dependent cell motility by mediating deacetylation of tubulin. Required for cilia disassembly via deacetylation of alpha-tubulin. Alpha-tubulin deacetylation results in destabilization of dynamic microtubules. Promotes deacetylation of CTTN, leading to actin polymerization, promotion of autophagosome-lysosome fusion and completion of autophagy. Deacetylates SQSTM1. Deacetylates peroxiredoxins PRDX1 and PRDX2, decreasing their reducing activity. Deacetylates antiviral protein RIGI in the presence of viral mRNAs which is required for viral RNA detection by RIGI. Sequentially deacetylates and polyubiquitinates DNA mismatch repair protein MSH2 which leads to MSH2 degradation, reducing cellular sensitivity to DNA-damaging agents and decreasing cellular DNA mismatch repair activities. Deacetylates DNA mismatch repair protein MLH1 which prevents recruitment of the MutL alpha complex (formed by the MLH1-PMS2 heterodimer) to the MutS alpha complex (formed by the MSH2-MSH6 heterodimer), leading to tolerance of DNA damage. Deacetylates RHOT1/MIRO1 which blocks mitochondrial transport and mediates axon growth inhibition. Deacetylates transcription factor SP1 which leads to increased expression of ENG, positively regulating angiogenesis. Deacetylates KHDRBS1/SAM68 which regulates alternative splicing by inhibiting the inclusion of CD44 alternate exons. Promotes odontoblast differentiation following IPO7-mediated nuclear import and subsequent repression of RUNX2 expression. In addition to its protein deacetylase activity, plays a key role in the degradation of misfolded proteins: when misfolded proteins are too abundant to be degraded by the chaperone refolding system and the ubiquitin-proteasome, mediates the transport of misfolded proteins to a cytoplasmic juxtanuclear structure called aggresome. Probably acts as an adapter that recognizes polyubiquitinated misfolded proteins and targets them to the aggresome, facilitating their clearance by autophagy. The sequence is that of Protein deacetylase HDAC6 from Rattus norvegicus (Rat).